The sequence spans 45 residues: uncharacterized protein (45 aa).

Residues 18–45 (RRGRIGVQPSPERRSEVVGPFPLARSLS) are disordered.

This is an uncharacterized protein from Homo sapiens (Human).